A 95-amino-acid chain; its full sequence is Integration host factor subunit beta (95 aa).

The protein belongs to the bacterial histone-like protein family. In terms of assembly, heterodimer of an alpha and a beta chain.

This protein is one of the two subunits of integration host factor, a specific DNA-binding protein that functions in genetic recombination as well as in transcriptional and translational control. Involved in hydrogenase gene expression. The protein is Integration host factor subunit beta (ihfB) of Rhodobacter capsulatus (Rhodopseudomonas capsulata).